A 389-amino-acid chain; its full sequence is Acetoin utilization protein AcuC (389 aa).

This sequence belongs to the histone deacetylase family.

Its pathway is ketone degradation; acetoin degradation. Role in growth on acetoin or butanediol. Involved in the breakdown of these compounds used as a carbon source. The chain is Acetoin utilization protein AcuC (acuC) from Staphylococcus aureus (strain MSSA476).